The primary structure comprises 120 residues: Large ribosomal subunit protein uL18 (120 aa).

It belongs to the universal ribosomal protein uL18 family. In terms of assembly, part of the 50S ribosomal subunit; part of the 5S rRNA/L5/L18/L25 subcomplex. Contacts the 5S and 23S rRNAs.

Functionally, this is one of the proteins that bind and probably mediate the attachment of the 5S RNA into the large ribosomal subunit, where it forms part of the central protuberance. The chain is Large ribosomal subunit protein uL18 from Rhodopseudomonas palustris (strain BisA53).